The primary structure comprises 322 residues: Germ cell-specific gene 1-like protein (322 aa).

Residues 1–8 (MELSRRNR) are Cytoplasmic-facing. The chain crosses the membrane as a helical span at residues 9–29 (SLLSVVLNLLALSFSVAAFFT). Topologically, residues 30-125 (SYWCEGTHKV…IELSPDSEKG (96 aa)) are extracellular. Residues 126–146 (VLWLSVISEFLYIILLSLGFL) traverse the membrane as a helical segment. Residues 147–166 (LMCLEFFSSSNFIDGLKINA) are Cytoplasmic-facing. Residues 167–187 (FAAIITVLSGLLGMVAHMMYM) traverse the membrane as a helical segment. The Extracellular portion of the chain corresponds to 188–209 (TVFQVTVNLGPKDWRPQTWYYG). A helical membrane pass occupies residues 210-230 (WSFGLAWLSFTLCMSASVLTL). Residues 231 to 322 (NTYTKTILEF…MDLEDDGDQC (92 aa)) lie on the Cytoplasmic side of the membrane.

It belongs to the GSG1 family. In terms of assembly, component of the AMPAR complex.

It is found in the cell membrane. Its subcellular location is the synapse. As a component of the AMPAR complex, modifies AMPA receptor (AMPAR) gating. This chain is Germ cell-specific gene 1-like protein (gsg1l), found in Xenopus tropicalis (Western clawed frog).